Reading from the N-terminus, the 147-residue chain is Ribonuclease 4 (147 aa).

Residues 1–28 (MALQRTHSLLLLLLLTLLGLGLVQPSYG) form the signal peptide. Glutamine 29 is subject to Pyrrolidone carboxylic acid. Positions 35, 40, 68, 71, and 72 each coordinate dUMP. Histidine 40 functions as the Proton acceptor in the catalytic mechanism. 4 disulfides stabilise this stretch: cysteine 53–cysteine 109, cysteine 67–cysteine 120, cysteine 85–cysteine 135, and cysteine 92–cysteine 99. The active-site Proton donor is the histidine 144. Phenylalanine 145 is a binding site for dUMP.

Belongs to the pancreatic ribonuclease family.

The protein localises to the secreted. Cleaves preferentially after uridine bases. Has antimicrobial activity against uropathogenic E.coli (UPEC). Probably contributes to urinary tract sterility. The polypeptide is Ribonuclease 4 (RNASE4) (Pan troglodytes (Chimpanzee)).